A 295-amino-acid chain; its full sequence is MSKIPSVNIKELLDAGVHFGHKTSRWNPKMASYIYGERDDVHIIDLRQSAALMSVALNTIYETVKKDGKILFVSTKIQASDIIAEYAEKCGQYYVNHRWLGGMLTNWKTIAGSIEKLNKLEKTLENEEALMGYTKKEILDMSRKKEKLLLSLAGIRNLNSKPDLLVVIDTNKEHIAINEAVKLNVPIVAVVDTNSNPDNVNYPIPGNDDSIRSIRLYCSLFADAALQGLEESMKASGVDMGAMQEHTDKALTSKNVSKLKQAKKFSKTKNIDEETNTEFEQALNDADENKNSDNA.

The disordered stretch occupies residues 260-295 (KQAKKFSKTKNIDEETNTEFEQALNDADENKNSDNA).

It belongs to the universal ribosomal protein uS2 family.

The protein is Small ribosomal subunit protein uS2 of Rickettsia felis (strain ATCC VR-1525 / URRWXCal2) (Rickettsia azadi).